The sequence spans 215 residues: Large ribosomal subunit protein bL25 (215 aa).

Positions 174 to 215 (ETVVTVQPPATEKEEETEAAVTDSEPEVINEKEEPAEEAKEE) are disordered. Residues 186–215 (KEEETEAAVTDSEPEVINEKEEPAEEAKEE) are compositionally biased toward acidic residues.

It belongs to the bacterial ribosomal protein bL25 family. CTC subfamily. In terms of assembly, part of the 50S ribosomal subunit; part of the 5S rRNA/L5/L18/L25 subcomplex. Contacts the 5S rRNA. Binds to the 5S rRNA independently of L5 and L18.

Its function is as follows. This is one of the proteins that binds to the 5S RNA in the ribosome where it forms part of the central protuberance. The chain is Large ribosomal subunit protein bL25 from Halalkalibacterium halodurans (strain ATCC BAA-125 / DSM 18197 / FERM 7344 / JCM 9153 / C-125) (Bacillus halodurans).